The sequence spans 1826 residues: Kinesin-like protein KIF13B (1826 aa).

Residues 5-353 (KVKVAVRIRP…LRYADRAKHI (349 aa)) form the Kinesin motor domain. 103–110 (GQTGSGKS) provides a ligand contact to ATP. Positions 364–439 (NARIIRDLRE…ESLGISLQSS (76 aa)) form a coiled coil. Positions 471–535 (TLIGSANSQD…LHHGDRILWG (65 aa)) constitute an FHA domain. Residues 546 to 582 (KKKKKAEREDEDQDPSMKNENSSEQLDVDGDSSSEVS) form a disordered region. Residues 561 to 570 (SMKNENSSEQ) show a composition bias toward polar residues. 3 coiled-coil regions span residues 607–710 (MQSI…LDKR), 752–772 (SLEK…EWKE), and 1096–1143 (LNAL…ERNA). Phosphoserine is present on serine 661. Positions 1367-1420 (EQLTGKGKLSRRSISSPNVNRLSGSRQDLIPSYSLGSNKGRWESQQDVSQTTVS) are disordered. 2 stretches are compositionally biased toward polar residues: residues 1378–1392 (RSIS…SGSR) and 1409–1420 (ESQQDVSQTTVS). A Phosphoserine modification is found at serine 1379. At serine 1381 the chain carries Phosphoserine; by MARK2. Serine 1382 and serine 1391 each carry phosphoserine. Serine 1410 carries the phosphoserine; by MARK2 modification. Serine 1432, serine 1438, and serine 1537 each carry phosphoserine. Threonine 1545 bears the Phosphothreonine mark. Serine 1559 is subject to Phosphoserine. Over residues 1579-1607 (SDALGPGLDAAAPPGSMPTAPEAEPEAPI) the composition is skewed to low complexity. 2 disordered regions span residues 1579–1650 (SDAL…RVRR) and 1662–1698 (MLAG…DEVP). The segment covering 1608–1624 (SHPPPPTAVPAEEPPGP) has biased composition (pro residues). Serine 1644 is modified (phosphoserine). Over residues 1671 to 1688 (PGAEGNAPAPGAGGQALA) the composition is skewed to low complexity. In terms of domain architecture, CAP-Gly spans 1721–1763 (GPADFQEGTWVGVELDLPSGKNDGSIGGKQYFRCNPGYGLLVR). Serine 1797 bears the Phosphoserine mark.

Belongs to the TRAFAC class myosin-kinesin ATPase superfamily. Kinesin family. Binds to DLG1 and DLG4. Interacts (when phosphorylated at Ser-1381 and Ser-1410) with 14-3-3. Post-translationally, phosphorylated at Ser-1381 and Ser-1410 by MARK2, promoting interaction with 14-3-3 and inhibiting microtubule-dependent accumulation and formation of axons. As to expression, ubiquitous.

The protein localises to the cytoplasm. It localises to the cytoskeleton. Its subcellular location is the cell projection. The protein resides in the axon. Involved in reorganization of the cortical cytoskeleton. Regulates axon formation by promoting the formation of extra axons. May be functionally important for the intracellular trafficking of MAGUKs and associated protein complexes. The sequence is that of Kinesin-like protein KIF13B (KIF13B) from Homo sapiens (Human).